The chain runs to 282 residues: Ribosome-inactivating protein bryodin II (282 aa).

A signal peptide spans 1–21; sequence MRSIGFYSVLALYVGAHVTED. Asparagine 25 is a glycosylation site (N-linked (GlcNAc...) asparagine). Glutamate 183 is an active-site residue.

The protein belongs to the ribosome-inactivating protein family. Type 1 RIP subfamily.

It carries out the reaction Endohydrolysis of the N-glycosidic bond at one specific adenosine on the 28S rRNA.. Ribosome-inactivating protein of type 1, inhibits protein synthesis in animal cells. The sequence is that of Ribosome-inactivating protein bryodin II from Bryonia dioica (Red bryony).